A 911-amino-acid polypeptide reads, in one-letter code: Protein SOSEKI (911 aa).

The DIX-like oligomerization domain stretch occupies residues 15–107; it reads TKVQVVYYLS…LVLKGSELYT (93 aa). Disordered regions lie at residues 219 to 470 and 492 to 810; these read SETL…TQCE and LCGN…PPRI. 2 stretches are compositionally biased toward basic and acidic residues: residues 253–286 and 295–407; these read TDRE…EVSR and EAPR…EELP. Over residues 414-423 the composition is skewed to polar residues; the sequence is SPTCSESGDS. The segment covering 452 to 467 has biased composition (low complexity); it reads SSSTRSSTPSTSAAST. The Association to cell membranes signature appears at 493 to 494; sequence CG. Over residues 511 to 527 the composition is skewed to low complexity; that stretch reads PLAAAAQPASGAVPQSP. Residues 591–607 show a composition bias toward polar residues; it reads SGVNSAMATPFLQTENN. Over residues 608 to 662 the composition is skewed to low complexity; it reads SPSSSESSSAAVSSGKKPASISLSGTSDASDGGNGASSTASSSSEVQNNVSVKEV. Residues 663-683 show a composition bias toward polar residues; that stretch reads ITQQLPSPSSSEGRPSLNIDT. Basic and acidic residues predominate over residues 696-709; the sequence is SDVRETVKTTRPDS. The segment covering 722–733 has biased composition (polar residues); the sequence is PVRTQLSSSPSF. Positions 735 to 771 are enriched in basic and acidic residues; that stretch reads KRIEDARARARSLVSKEIRSGESRSSKDLLKENDRVK. The segment covering 772-784 has biased composition (low complexity); the sequence is TSSGSMRSGSTRT. Positions 785–805 are enriched in polar residues; sequence PNNKNGTTGAGSKTLSGTFNR. A C2HC/C3H-type zinc finger spans residues 864–893; sequence ILQECGQCGRTFKPDSLKVHMRGCHALRRS. The Zn(2+) site is built by cysteine 868, cysteine 871, histidine 883, and cysteine 887.

It belongs to the SOSEKI family. In terms of assembly, homodimer. Forms long polymer filaments with other SOKs proteins polymers crucial for polar localization and biological activity. Zn(2+) serves as cofactor.

It is found in the cell membrane. Its function is as follows. SOSEKI proteins locally interpret global polarity cues and can influence cell division orientation to coordinate cell polarization relative to body axes. The chain is Protein SOSEKI from Marchantia polymorpha (Common liverwort).